Consider the following 143-residue polypeptide: Anti-sigma F factor (143 aa).

This sequence belongs to the anti-sigma-factor family.

It carries out the reaction L-seryl-[protein] + ATP = O-phospho-L-seryl-[protein] + ADP + H(+). The enzyme catalyses L-threonyl-[protein] + ATP = O-phospho-L-threonyl-[protein] + ADP + H(+). Its function is as follows. Binds to sigma F and blocks its ability to form an RNA polymerase holoenzyme (E-sigma F). Phosphorylates SpoIIAA on a serine residue. This phosphorylation may enable SpoIIAA to act as an anti-anti-sigma factor that counteracts SpoIIAB and thus releases sigma F from inhibition. This chain is Anti-sigma F factor, found in Caldanaerobacter subterraneus subsp. tengcongensis (strain DSM 15242 / JCM 11007 / NBRC 100824 / MB4) (Thermoanaerobacter tengcongensis).